Consider the following 350-residue polypeptide: Ion-translocating oxidoreductase complex subunit D (350 aa).

The next 4 helical transmembrane spans lie at 37–57 (YFFG…ALTA), 68–88 (AVLS…IGVA), 89–109 (IPPI…IVLV), and 120–140 (IFNP…VQMT). At Thr185 the chain carries FMN phosphoryl threonine. 5 consecutive transmembrane segments (helical) span residues 212-232 (GYGV…LIML), 239-259 (WHIS…GYLL), 265-285 (VGPL…FIAT), 291-311 (ATSV…VYVI), and 315-335 (GGYP…APFI).

This sequence belongs to the NqrB/RnfD family. The complex is composed of six subunits: RnfA, RnfB, RnfC, RnfD, RnfE and RnfG. The cofactor is FMN.

The protein localises to the cell inner membrane. Its function is as follows. Part of a membrane-bound complex that couples electron transfer with translocation of ions across the membrane. The sequence is that of Ion-translocating oxidoreductase complex subunit D from Shewanella pealeana (strain ATCC 700345 / ANG-SQ1).